The primary structure comprises 68 residues: uncharacterized protein (68 aa).

Residues 1–27 are disordered; the sequence is MNEFEKWIEGRYEPHEQKQKEHEDTMG.

This is an uncharacterized protein from Bacillus subtilis (strain 168).